The sequence spans 657 residues: Glycogen debranching enzyme (657 aa).

Catalysis depends on aspartate 336, which acts as the Nucleophile. Glutamate 371 acts as the Proton donor in catalysis. A disordered region spans residues 460–479; the sequence is ANGEENRDGTNNNYSNNHGK.

It belongs to the glycosyl hydrolase 13 family.

The enzyme catalyses Hydrolysis of (1-&gt;6)-alpha-D-glucosidic linkages to branches with degrees of polymerization of three or four glucose residues in limit dextrin.. It functions in the pathway glycan degradation; glycogen degradation. Removes maltotriose and maltotetraose chains that are attached by 1,6-alpha-linkage to the limit dextrin main chain, generating a debranched limit dextrin. The sequence is that of Glycogen debranching enzyme from Shigella flexneri serotype 5b (strain 8401).